The chain runs to 1267 residues: Clustered mitochondria protein homolog (1267 aa).

TPR repeat units follow at residues 64-102 (YNLK…KPYN), 420-453 (YSFV…LNML), 716-749 (EAHE…MIKE), 795-830 (LVPL…IPAL), 904-939 (RSIC…KSRA), 1010-1043 (AEKY…YERV), and 1138-1171 (AYIK…FTKE). A Clu domain is found at 329 to 586 (PTNGPDYLRT…NTYPLDVEFA (258 aa)). Residues 1203-1219 (QQDQTAASGLKQQPQKS) show a composition bias toward polar residues. Positions 1203-1267 (QQDQTAASGL…KSKSKGKNKK (65 aa)) are disordered. Positions 1224-1239 (NKKETTNPDLADKSVD) are enriched in basic and acidic residues. Over residues 1254–1267 (KTTKKSKSKGKNKK) the composition is skewed to basic residues.

Belongs to the CLU family. May associate with the eukaryotic translation initiation factor 3 (eIF-3) complex.

The protein localises to the cytoplasm. Functionally, mRNA-binding protein involved in proper cytoplasmic distribution of mitochondria. The chain is Clustered mitochondria protein homolog from Candida glabrata (strain ATCC 2001 / BCRC 20586 / JCM 3761 / NBRC 0622 / NRRL Y-65 / CBS 138) (Yeast).